A 222-amino-acid polypeptide reads, in one-letter code: Thiopurine S-methyltransferase (222 aa).

S-adenosyl-L-methionine is bound by residues Trp10, Leu45, Glu66, and Arg123.

It belongs to the class I-like SAM-binding methyltransferase superfamily. TPMT family.

The protein localises to the cytoplasm. The enzyme catalyses S-adenosyl-L-methionine + a thiopurine = S-adenosyl-L-homocysteine + a thiopurine S-methylether.. The sequence is that of Thiopurine S-methyltransferase from Pseudomonas fluorescens (strain ATCC BAA-477 / NRRL B-23932 / Pf-5).